The following is a 375-amino-acid chain: Chaperone protein DnaJ (375 aa).

Residues 5–70 enclose the J domain; sequence DYYEVLGVSR…EKRARYDRFG (66 aa). A CR-type zinc finger spans residues 136 to 214; the sequence is GDEVTLRIPK…CRGAGQVQDI (79 aa). Zn(2+)-binding residues include C149, C152, C166, C169, C188, C191, C202, and C205. CXXCXGXG motif repeat units lie at residues 149 to 156, 166 to 173, 188 to 195, and 202 to 209; these read CPDCSGSG, CPQCGGSG, CSACRGEG, and CPRCRGAG.

Belongs to the DnaJ family. As to quaternary structure, homodimer. It depends on Zn(2+) as a cofactor.

Its subcellular location is the cytoplasm. Its function is as follows. Participates actively in the response to hyperosmotic and heat shock by preventing the aggregation of stress-denatured proteins and by disaggregating proteins, also in an autonomous, DnaK-independent fashion. Unfolded proteins bind initially to DnaJ; upon interaction with the DnaJ-bound protein, DnaK hydrolyzes its bound ATP, resulting in the formation of a stable complex. GrpE releases ADP from DnaK; ATP binding to DnaK triggers the release of the substrate protein, thus completing the reaction cycle. Several rounds of ATP-dependent interactions between DnaJ, DnaK and GrpE are required for fully efficient folding. Also involved, together with DnaK and GrpE, in the DNA replication of plasmids through activation of initiation proteins. In Oleidesulfovibrio alaskensis (strain ATCC BAA-1058 / DSM 17464 / G20) (Desulfovibrio alaskensis), this protein is Chaperone protein DnaJ.